A 1337-amino-acid chain; its full sequence is ABC transporter D family member 1 (1337 aa).

A run of 4 helical transmembrane segments spans residues Ile-24–Val-44, Ala-142–Leu-162, Tyr-247–Ile-267, and Phe-342–Ser-362. One can recognise an ABC transmembrane type-1 1 domain in the interval Val-117–Leu-395. The region spanning Val-448–Ala-695 is the ABC transporter 1 domain. Gly-481–Ser-488 is a binding site for ATP. The region spanning Leu-751–Gly-1049 is the ABC transmembrane type-1 2 domain. Residues Leu-900–Phe-920 traverse the membrane as a helical segment. The ABC transporter 2 domain maps to Leu-1091–Glu-1337. An ATP-binding site is contributed by Gly-1130 to Thr-1137.

This sequence belongs to the ABC transporter superfamily. ABCD family. Peroxisomal fatty acyl CoA transporter (TC 3.A.1.203) subfamily.

The protein resides in the peroxisome membrane. It localises to the glyoxysome membrane. The enzyme catalyses an acyl-CoA(out) + ATP + H2O = an acyl-CoA(in) + ADP + phosphate + H(+). Functionally, contributes to the transport of fatty acids and their derivatives (acyl CoAs) across the peroxisomal membrane. Provides acetate to the glyoxylate cycle in developing seedlings. Involved in pollen tube elongation, ovule fertilization, and seeds germination after imbibition (controls the switch between the opposing developmental programs of dormancy and germination), probably by promoting beta-oxidation of storage lipids during gluconeogenesis. Required for biosynthesis of jasmonic acid and conversion of indole butyric acid to indole acetic acid. Confers sensitivity to monofluoroacetic acid (FAc), a toxic acetate analog, and to 2,4-dichlorophenoxybutyric acid (2,4-DB) and indole-3-butyric acid (IBA), two precursors of auxin after beta-oxidation. In Arabidopsis thaliana (Mouse-ear cress), this protein is ABC transporter D family member 1.